The chain runs to 196 residues: Spore maturation protein A (196 aa).

Transmembrane regions (helical) follow at residues 1–21 (MVNI…MCNG), 37–57 (AITI…LMKI), 133–153 (ITFL…VIAV), and 163–183 (TDIV…AIII).

It is found in the cell membrane. In terms of biological role, involved in spore core dehydration; might be involved in the transport of something into or out of the forespore or could be required for some modification of the cortex peptidoglycan structure. The protein is Spore maturation protein A (spmA) of Bacillus subtilis (strain 168).